We begin with the raw amino-acid sequence, 34 residues long: Photosystem II reaction center protein M (34 aa).

The helical transmembrane segment at 5–25 threads the bilayer; it reads ILAVIATALFVLIPTAFLLIL.

It belongs to the PsbM family. PSII is composed of 1 copy each of membrane proteins PsbA, PsbB, PsbC, PsbD, PsbE, PsbF, PsbH, PsbI, PsbJ, PsbK, PsbL, PsbM, PsbT, PsbX, PsbY, PsbZ, Psb30/Ycf12, at least 3 peripheral proteins of the oxygen-evolving complex and a large number of cofactors. It forms dimeric complexes.

It localises to the plastid. Its subcellular location is the chloroplast thylakoid membrane. One of the components of the core complex of photosystem II (PSII). PSII is a light-driven water:plastoquinone oxidoreductase that uses light energy to abstract electrons from H(2)O, generating O(2) and a proton gradient subsequently used for ATP formation. It consists of a core antenna complex that captures photons, and an electron transfer chain that converts photonic excitation into a charge separation. This subunit is found at the monomer-monomer interface. This Chaetosphaeridium globosum (Charophycean green alga) protein is Photosystem II reaction center protein M.